Here is a 328-residue protein sequence, read N- to C-terminus: Arabinose 5-phosphate isomerase KdsD (328 aa).

Residues Cys42–Phe184 enclose the SIS domain. Residues Gly75 to Thr76, His82, His88, Ala114 to His123, Lys148 to Ala150, Thr222, and Asp275 each bind substrate. Residue His82 participates in Zn(2+) binding. The 59-residue stretch at Met210–Val268 folds into the CBS 1 domain. Residues Met277–Val328 enclose the CBS 2 domain.

Belongs to the SIS family. GutQ/KpsF subfamily. In terms of assembly, homotetramer.

The enzyme catalyses D-arabinose 5-phosphate = D-ribulose 5-phosphate. It functions in the pathway carbohydrate biosynthesis; 3-deoxy-D-manno-octulosonate biosynthesis; 3-deoxy-D-manno-octulosonate from D-ribulose 5-phosphate: step 1/3. The protein operates within bacterial outer membrane biogenesis; lipopolysaccharide biosynthesis. Its activity is regulated as follows. Completely inhibited by 10 uM of nickel, copper, cadmium and mercury ions. Inhibited by zinc with an IC(50) of 1-3 uM. Metal ion inhibition may be a mechanism to control activity in vivo. Its function is as follows. Involved in the biosynthesis of 3-deoxy-D-manno-octulosonate (KDO), a unique 8-carbon sugar component of lipopolysaccharides (LPSs). KdsD is not essential in the KDO biosynthesis and can be substituted by GutQ. Catalyzes the reversible aldol-ketol isomerization between D-ribulose 5-phosphate (Ru5P) and D-arabinose 5-phosphate (A5P). This chain is Arabinose 5-phosphate isomerase KdsD (kdsD), found in Escherichia coli (strain K12).